The chain runs to 658 residues: Threonine--tRNA ligase (658 aa).

A TGS domain is found at 1–64 (MSNTVSLQFP…GASGKVEIIT (64 aa)). The segment at 246-548 (DHRRLGREMD…LIENFAGHMP (303 aa)) is catalytic. The Zn(2+) site is built by C343, H394, and H525.

This sequence belongs to the class-II aminoacyl-tRNA synthetase family. In terms of assembly, homodimer. It depends on Zn(2+) as a cofactor.

Its subcellular location is the cytoplasm. The enzyme catalyses tRNA(Thr) + L-threonine + ATP = L-threonyl-tRNA(Thr) + AMP + diphosphate + H(+). Functionally, catalyzes the attachment of threonine to tRNA(Thr) in a two-step reaction: L-threonine is first activated by ATP to form Thr-AMP and then transferred to the acceptor end of tRNA(Thr). Also edits incorrectly charged L-seryl-tRNA(Thr). The chain is Threonine--tRNA ligase from Brucella melitensis biotype 1 (strain ATCC 23456 / CCUG 17765 / NCTC 10094 / 16M).